Reading from the N-terminus, the 273-residue chain is 4-hydroxy-tetrahydrodipicolinate reductase (273 aa).

NAD(+) contacts are provided by residues 12–17 and glutamate 38; that span reads GAGGRM. Position 39 (arginine 39) interacts with NADP(+). NAD(+) contacts are provided by residues 102 to 104 and 126 to 129; these read GTT and AANF. The active-site Proton donor/acceptor is histidine 159. Position 160 (histidine 160) interacts with (S)-2,3,4,5-tetrahydrodipicolinate. Lysine 163 serves as the catalytic Proton donor. A (S)-2,3,4,5-tetrahydrodipicolinate-binding site is contributed by 169–170; sequence GT.

This sequence belongs to the DapB family. As to quaternary structure, homotetramer.

It localises to the cytoplasm. The enzyme catalyses (S)-2,3,4,5-tetrahydrodipicolinate + NAD(+) + H2O = (2S,4S)-4-hydroxy-2,3,4,5-tetrahydrodipicolinate + NADH + H(+). The catalysed reaction is (S)-2,3,4,5-tetrahydrodipicolinate + NADP(+) + H2O = (2S,4S)-4-hydroxy-2,3,4,5-tetrahydrodipicolinate + NADPH + H(+). It functions in the pathway amino-acid biosynthesis; L-lysine biosynthesis via DAP pathway; (S)-tetrahydrodipicolinate from L-aspartate: step 4/4. Its function is as follows. Catalyzes the conversion of 4-hydroxy-tetrahydrodipicolinate (HTPA) to tetrahydrodipicolinate. This is 4-hydroxy-tetrahydrodipicolinate reductase from Escherichia coli O127:H6 (strain E2348/69 / EPEC).